The chain runs to 313 residues: MALALCRMSHSPLLNLPGPRLDLLDEVHAAIAEAAEFVRAYDPDLVVIFSPDHYNGFFYRAMHPFCIGMYASAVGDYGTHIGALDVPTDLAADCAKAVLGADVDVAVSASMDVDHGTVQPLEKLFGTATARPVIPIFINAIAAPLGPLRRCRALGTAVGTFLSTLDLRVLVIGSGGLSHSPPVPTLHSADPQVRERIVHGQPLTPAQRQARQTVVMEAAKSFAAGNSDLQPLNPAWDQRFLEIIDNGHLSDLDRWSNSFVTHEGGSLAHEIRTWISAFAAMAVAGPYQTKVRYYKQAADLIAGFAIRTAVPIP.

Residue H115 is the Proton donor of the active site. H179 acts as the Proton acceptor in catalysis.

It belongs to the LigB/MhpB extradiol dioxygenase family. In terms of assembly, homotetramer. Requires Fe(2+) as cofactor.

The catalysed reaction is 3-(2,3-dihydroxyphenyl)propanoate + O2 = (2Z,4E)-2-hydroxy-6-oxonona-2,4-dienedioate + H(+). The enzyme catalyses (2E)-3-(2,3-dihydroxyphenyl)prop-2-enoate + O2 = (2Z,4E,7E)-2-hydroxy-6-oxonona-2,4,7-trienedioate + H(+). The protein operates within aromatic compound metabolism; 3-phenylpropanoate degradation. In terms of biological role, catalyzes the non-heme iron(II)-dependent oxidative cleavage of 2,3-dihydroxyphenylpropionic acid and 2,3-dihydroxicinnamic acid into 2-hydroxy-6-ketononadienedioate and 2-hydroxy-6-ketononatrienedioate, respectively. This is 2,3-dihydroxyphenylpropionate/2,3-dihydroxicinnamic acid 1,2-dioxygenase from Mycobacterium ulcerans (strain Agy99).